Consider the following 332-residue polypeptide: 2,3-diketo-L-gulonate reductase (332 aa).

Catalysis depends on H44, which acts as the Proton donor. NAD(+) contacts are provided by residues 168–174, 224–225, and 304–306; these read ITMVDMS, WK, and GHE.

The protein belongs to the LDH2/MDH2 oxidoreductase family. DlgD subfamily. In terms of assembly, homodimer.

It is found in the cytoplasm. It catalyses the reaction 3-dehydro-L-gulonate + NAD(+) = 2,3-dioxo-L-gulonate + NADH + H(+). The enzyme catalyses 3-dehydro-L-gulonate + NADP(+) = 2,3-dioxo-L-gulonate + NADPH + H(+). Functionally, catalyzes the reduction of 2,3-diketo-L-gulonate in the presence of NADH, to form 3-keto-L-gulonate. The sequence is that of 2,3-diketo-L-gulonate reductase from Salmonella paratyphi C (strain RKS4594).